We begin with the raw amino-acid sequence, 233 residues long: Antiholin-like protein LrgB (233 aa).

The next 7 helical transmembrane spans lie at 9–29 (TPYF…ILFE), 34–54 (FFLF…LYLT), 63–83 (IGGD…AIPL), 97–117 (IIGG…TFAK), 121–141 (FAND…IALP), 144–164 (AGIG…GVII), and 212–232 (IALV…VAIF).

The protein belongs to the CidB/LrgB family. LrgB subfamily.

It is found in the cell membrane. Functionally, inhibits the expression or activity of extracellular murein hydrolases by interacting, possibly with LrgA, with the holin-like proteins CidA and/or CidB. The LrgAB and CidAB proteins may affect the proton motive force of the membrane. May be involved in programmed cell death (PCD), possibly triggering PCD in response to antibiotics and environmental stresses. This chain is Antiholin-like protein LrgB, found in Staphylococcus aureus (strain Mu3 / ATCC 700698).